A 293-amino-acid polypeptide reads, in one-letter code: MADDAGAAGGPGGPGGPGLGGRGGFRGGFGSGLRGRGRGRGRGRGRGRGARGGKAEDKEWIPVTKLGRLVKDMKIKSLEEIYLFSLPIKESEIIDFFLGASLKDEVLKIMPVQKQTRAGQRTRFKAFVAIGDYNGHVGLGVKCSKEVATAIRGAIILAKLSIVPVRRGYWGNKIGKPHTVPCKVTGRCGSVLVRLIPAPRGTGIVSAPVPKKLLMMAGIDDCYTSARGCTATLGNFAKATFDAISKTYSYLTPDLWKETVFTKSPYQEFTDHLVKTHTRVSVQRTQAPAVATT.

A disordered region spans residues Met1 to Ala55. At Ala2 the chain carries N-acetylalanine. Over residues Ala7–Arg34 the composition is skewed to gly residues. 14 tandem repeats follow at residues Gly9–Pro11, Gly12–Pro14, Gly15–Pro17, Arg22–Phe25, Arg26–Phe29, Arg34–Gly35, Arg36–Gly37, Arg38–Gly39, Arg40–Gly41, Arg42–Gly43, Arg44–Gly45, Arg46–Gly47, Arg48–Gly49, and Arg51–Gly52. Residues Gly9 to Pro17 are 3 X 3 AA tandem repeats of G-G-P. Positions Arg22 to Phe29 are 2 X 4 AA tandem repeats of R-G-G-F. The segment at Arg34 to Gly52 is 9 X 2 AA tandem repeats of R-G. The segment covering Gly35–Arg51 has biased composition (basic residues). Glycyl lysine isopeptide (Lys-Gly) (interchain with G-Cter in ubiquitin) cross-links involve residues Lys54 and Lys58. An S5 DRBM domain is found at Leu102–Val165. Thr252 carries the post-translational modification Phosphothreonine. Residue Lys263 is modified to N6-acetyllysine. Position 264 is a phosphoserine (Ser264). Phosphothreonine is present on Thr270. Position 275 is an N6-acetyllysine; alternate (Lys275). Lys275 is covalently cross-linked (Glycyl lysine isopeptide (Lys-Gly) (interchain with G-Cter in SUMO1); alternate). Lys275 is covalently cross-linked (Glycyl lysine isopeptide (Lys-Gly) (interchain with G-Cter in SUMO2); alternate). Lys275 participates in a covalent cross-link: Glycyl lysine isopeptide (Lys-Gly) (interchain with G-Cter in ubiquitin); alternate. Ser281 bears the Phosphoserine mark.

Belongs to the universal ribosomal protein uS5 family. Component of the small ribosomal subunit. Interacts with zinc finger protein ZNF277 (via zinc-finger domains); the interaction is direct; the interaction is extra-ribosomal. Interaction with ZNF277 competes with the binding of RPS2 to protein arginine methyltransferase PRMT3. In terms of processing, citrullinated by PADI4 in the Arg/Gly-rich region. Post-translationally, asymmetric arginine dimethylation by PRMT3 occurs at multiple sites in the Arg/Gly-rich region. Monoubiquitinated at Lys-54 and Lys-58 by RNF10 when a ribosome has stalled during translation, leading to its degradation by the proteasome. Deubiquitinated at Lys-54 and Lys-58 by USP10, preventing degradation by the proteasome and promoting 40S ribosome subunit recycling following ribosome dissociation.

It is found in the cytoplasm. The protein resides in the nucleus. Its subcellular location is the nucleolus. Its function is as follows. Component of the ribosome, a large ribonucleoprotein complex responsible for the synthesis of proteins in the cell. The small ribosomal subunit (SSU) binds messenger RNAs (mRNAs) and translates the encoded message by selecting cognate aminoacyl-transfer RNA (tRNA) molecules. The large subunit (LSU) contains the ribosomal catalytic site termed the peptidyl transferase center (PTC), which catalyzes the formation of peptide bonds, thereby polymerizing the amino acids delivered by tRNAs into a polypeptide chain. The nascent polypeptides leave the ribosome through a tunnel in the LSU and interact with protein factors that function in enzymatic processing, targeting, and the membrane insertion of nascent chains at the exit of the ribosomal tunnel. Plays a role in the assembly and function of the 40S ribosomal subunit. Mutations in this protein affects the control of translational fidelity. Involved in nucleolar processing of pre-18S ribosomal RNA and ribosome assembly. The chain is Small ribosomal subunit protein uS5 (Rps2) from Rattus norvegicus (Rat).